Here is a 401-residue protein sequence, read N- to C-terminus: Imidazolonepropionase (401 aa).

Residues His-66 and His-68 each coordinate Fe(3+). Zn(2+) contacts are provided by His-66 and His-68. 3 residues coordinate 4-imidazolone-5-propanoate: Arg-75, Tyr-138, and His-171. Tyr-138 is a binding site for N-formimidoyl-L-glutamate. His-236 is a binding site for Fe(3+). His-236 provides a ligand contact to Zn(2+). Gln-239 provides a ligand contact to 4-imidazolone-5-propanoate. Position 311 (Asp-311) interacts with Fe(3+). Residue Asp-311 coordinates Zn(2+). 2 residues coordinate N-formimidoyl-L-glutamate: Asn-313 and Gly-315. 4-imidazolone-5-propanoate is bound at residue Thr-316.

The protein belongs to the metallo-dependent hydrolases superfamily. HutI family. The cofactor is Zn(2+). Fe(3+) serves as cofactor.

Its subcellular location is the cytoplasm. It catalyses the reaction 4-imidazolone-5-propanoate + H2O = N-formimidoyl-L-glutamate. It functions in the pathway amino-acid degradation; L-histidine degradation into L-glutamate; N-formimidoyl-L-glutamate from L-histidine: step 3/3. Catalyzes the hydrolytic cleavage of the carbon-nitrogen bond in imidazolone-5-propanoate to yield N-formimidoyl-L-glutamate. It is the third step in the universal histidine degradation pathway. The sequence is that of Imidazolonepropionase from Acinetobacter baumannii (strain AB307-0294).